The primary structure comprises 340 residues: Functional amyloid subunit FapC (340 aa).

The first 24 residues, 1 to 24 (MKATMVLTPLALAMAAVLSVSAYA), serve as a signal peptide directing secretion. The FapC_R1 repeat unit spans residues 67–100 (NNASVSGSIKDASGNVGVNVAAGDNNQQANAAAL). Residues 101–133 (ASADASFVFGTATASTSVLQSGYGNTLNNYSNP) form a linker 1 region. A FapC_R2 repeat occupies 134 to 167 (NTASLSNSANNVSGNLGVNVAAGNFNQQKNDLAA). Residues 168–290 (AVSNGQYSTA…AIVGFKTPVT (123 aa)) are linker 2. The FapC_R3 repeat unit spans residues 291 to 324 (NNASLSNSLQNVSGNVGVNIAAGGGNQQSNSLSI). The short motif at 328 to 331 (CSSC) is the Cys-X-X-Cys element.

This sequence belongs to the FapB/FapC family. The major component of purified amyloid fibrils. Fibrils are resistant to boiling in 2% (weight/vol) SDS and require &gt;90% (vol/vol) formic acid to dissolve. Interacts with FapA in vitro.

The protein resides in the fimbrium. The protein localises to the secreted. Its function is as follows. The major functional amyloid subunit in this bacterium. Upon overexpression of the endogenous six-gene locus (fapA-fapF), cells form large clumps during liquid growth, make large amounts of biofilm and produce amyloid fibrils. This chain is Functional amyloid subunit FapC, found in Pseudomonas aeruginosa (strain ATCC 15692 / DSM 22644 / CIP 104116 / JCM 14847 / LMG 12228 / 1C / PRS 101 / PAO1).